Consider the following 305-residue polypeptide: Putative ABC transporter molybdenum-binding protein HVO_B0369 (305 aa).

Positions 1–40 (MNPDSAAGRSSRRAFLAAVGGVAAGGLTATAGCLGRGEEA) form a signal peptide, tat-type signal.

This sequence belongs to the bacterial solute-binding protein 1 family. WtpA subfamily. In terms of assembly, the complex is composed of two ATP-binding proteins, two transmembrane proteins (HVO_B0370) and a solute-binding protein (HVO_B0369). Predicted to be exported by the Tat system. The position of the signal peptide cleavage has not been experimentally proven.

Functionally, part of an ABC transporter complex involved in molybdenum import. The protein is Putative ABC transporter molybdenum-binding protein HVO_B0369 of Haloferax volcanii (strain ATCC 29605 / DSM 3757 / JCM 8879 / NBRC 14742 / NCIMB 2012 / VKM B-1768 / DS2) (Halobacterium volcanii).